Reading from the N-terminus, the 138-residue chain is Large ribosomal subunit protein uL16 (138 aa).

Basic residues predominate over residues 1-15 (MLSPRKVKYRKKQRG). The interval 1–20 (MLSPRKVKYRKKQRGRLSGE) is disordered.

This sequence belongs to the universal ribosomal protein uL16 family. In terms of assembly, part of the 50S ribosomal subunit.

In terms of biological role, binds 23S rRNA and is also seen to make contacts with the A and possibly P site tRNAs. In Borrelia turicatae (strain 91E135), this protein is Large ribosomal subunit protein uL16.